A 1398-amino-acid polypeptide reads, in one-letter code: DNA-directed RNA polymerase subunit beta' (1398 aa).

Residues Cys-71, Cys-73, Cys-86, and Cys-89 each contribute to the Zn(2+) site. The Mg(2+) site is built by Asp-462, Asp-464, and Asp-466. Residues Cys-810, Cys-884, Cys-891, and Cys-894 each coordinate Zn(2+).

Belongs to the RNA polymerase beta' chain family. The RNAP catalytic core consists of 2 alpha, 1 beta, 1 beta' and 1 omega subunit. When a sigma factor is associated with the core the holoenzyme is formed, which can initiate transcription. Mg(2+) is required as a cofactor. Zn(2+) serves as cofactor.

It catalyses the reaction RNA(n) + a ribonucleoside 5'-triphosphate = RNA(n+1) + diphosphate. DNA-dependent RNA polymerase catalyzes the transcription of DNA into RNA using the four ribonucleoside triphosphates as substrates. The chain is DNA-directed RNA polymerase subunit beta' from Mesorhizobium japonicum (strain LMG 29417 / CECT 9101 / MAFF 303099) (Mesorhizobium loti (strain MAFF 303099)).